We begin with the raw amino-acid sequence, 952 residues long: Isoleucine--tRNA ligase (952 aa).

The short motif at 58 to 68 (PYANGDIHIGH) is the 'HIGH' region element. An L-isoleucyl-5'-AMP-binding site is contributed by glutamate 576. The 'KMSKS' region signature appears at 617–621 (KMSKS). Lysine 620 contacts ATP. 4 residues coordinate Zn(2+): cysteine 915, cysteine 918, cysteine 935, and cysteine 938.

This sequence belongs to the class-I aminoacyl-tRNA synthetase family. IleS type 1 subfamily. As to quaternary structure, monomer. Zn(2+) is required as a cofactor.

The protein resides in the cytoplasm. It carries out the reaction tRNA(Ile) + L-isoleucine + ATP = L-isoleucyl-tRNA(Ile) + AMP + diphosphate. In terms of biological role, catalyzes the attachment of isoleucine to tRNA(Ile). As IleRS can inadvertently accommodate and process structurally similar amino acids such as valine, to avoid such errors it has two additional distinct tRNA(Ile)-dependent editing activities. One activity is designated as 'pretransfer' editing and involves the hydrolysis of activated Val-AMP. The other activity is designated 'posttransfer' editing and involves deacylation of mischarged Val-tRNA(Ile). This is Isoleucine--tRNA ligase from Vibrio atlanticus (strain LGP32) (Vibrio splendidus (strain Mel32)).